The chain runs to 1319 residues: Cellulose synthase operon protein C (1319 aa).

Residues 1 to 46 (MNRRYVLSLSGALLASSCMTVLVAVPVARAQQASTAMTTAATSATA) form the signal peptide. 8 TPR repeats span residues 49–82 (RQIL…APNS), 84–116 (DVLE…APGS), 291–324 (AGLA…NSHD), 325–358 (ADSL…DPKT), 405–438 (TGAT…EPNN), 557–590 (NDAM…KQDL), 701–734 (MGIS…DPEA), and 736–768 (SPKL…NPQD). Positions 841–855 (RAASGAGAAQEDALA) are enriched in low complexity. The interval 841–890 (RAASGAGAAQEDALAPPSTNPFRPRGYGHQTELGAPVTGGSYSAEAASPD) is disordered. The stretch at 1059 to 1094 (RRSITNSVLSYGGLRDTNYNSALGRYARQVYGQALS) is one TPR 9 repeat.

This sequence belongs to the AcsC/BcsC family.

The protein resides in the cell outer membrane. The protein operates within glycan metabolism; bacterial cellulose biosynthesis. In terms of biological role, required for maximal bacterial cellulose synthesis. It may be involved in the formation of a membrane complex for extrusion of the cellulose product. The sequence is that of Cellulose synthase operon protein C (bcsC) from Komagataeibacter xylinus (Gluconacetobacter xylinus).